The primary structure comprises 349 residues: 4-hydroxy-2-oxovalerate aldolase 1 (349 aa).

In terms of domain architecture, Pyruvate carboxyltransferase spans 9-261 (ITVHDMTLRD…ATGVDVFRIQ (253 aa)). 17–18 (RD) contacts substrate. Asp-18 provides a ligand contact to Mn(2+). His-21 (proton acceptor) is an active-site residue. Substrate is bound by residues Ser-171 and His-200. The Mn(2+) site is built by His-200 and His-202. Tyr-291 is a substrate binding site.

Belongs to the 4-hydroxy-2-oxovalerate aldolase family.

The enzyme catalyses (S)-4-hydroxy-2-oxopentanoate = acetaldehyde + pyruvate. This is 4-hydroxy-2-oxovalerate aldolase 1 from Methylibium petroleiphilum (strain ATCC BAA-1232 / LMG 22953 / PM1).